Reading from the N-terminus, the 180-residue chain is MANRLKEKYLKEVVPSLTEKFNYSSVMAVPKVDKIVLNMGVGDAVSNAKNLEKAAEELALISGQKPLITKAKKSIAGFRLREGVAIGAKVTLRGERMYEFLDKLVSVSLPRVRDFHGVPTKSFDGRGNYTLGVKEQLIFPEINFDDVDKTRGLDIVIVTTANTDEESRELLTGLGMPFAK.

The protein belongs to the universal ribosomal protein uL5 family. Part of the 50S ribosomal subunit; part of the 5S rRNA/L5/L18/L25 subcomplex. Contacts the 5S rRNA and the P site tRNA. Forms a bridge to the 30S subunit in the 70S ribosome.

Its function is as follows. This is one of the proteins that bind and probably mediate the attachment of the 5S RNA into the large ribosomal subunit, where it forms part of the central protuberance. In the 70S ribosome it contacts protein S13 of the 30S subunit (bridge B1b), connecting the 2 subunits; this bridge is implicated in subunit movement. Contacts the P site tRNA; the 5S rRNA and some of its associated proteins might help stabilize positioning of ribosome-bound tRNAs. This is Large ribosomal subunit protein uL5 from Streptococcus sanguinis (strain SK36).